We begin with the raw amino-acid sequence, 135 residues long: Peptidyl-prolyl cis-trans isomerase FPR2 (135 aa).

A signal peptide spans 1-17; that stretch reads MMFNIYLFVTFFSTILA. The PPIase FKBP-type domain maps to 43–132; it reads GDKVKVHYTG…VFDVELVDVK (90 aa).

It belongs to the FKBP-type PPIase family. FKBP2 subfamily.

Its subcellular location is the endoplasmic reticulum membrane. The enzyme catalyses [protein]-peptidylproline (omega=180) = [protein]-peptidylproline (omega=0). Its activity is regulated as follows. Inhibited by both FK506 and rapamycin. Binds FK506 with 15-fold lower affinity than FKB1. PPIases accelerate the folding of proteins. It catalyzes the cis-trans isomerization of proline imidic peptide bonds in oligopeptides. FKBP-13 may play a role in protein trafficking in the ER. The sequence is that of Peptidyl-prolyl cis-trans isomerase FPR2 (FPR2) from Saccharomyces cerevisiae (strain ATCC 204508 / S288c) (Baker's yeast).